Consider the following 588-residue polypeptide: Glutathione/L-cysteine transport system ATP-binding/permease protein CydD (588 aa).

Residues M1 to Q15 are Cytoplasmic-facing. Transmembrane regions (helical) follow at residues Q16–I36 and L37–I57. Positions S20–D306 constitute an ABC transmembrane type-1 domain. At P58–Y136 the chain is on the cytoplasmic side. Residues Y137 to A157 form a helical membrane-spanning segment. At I158–S161 the chain is on the periplasmic side. Residues N162–L182 form a helical membrane-spanning segment. Residues V183–S249 lie on the Cytoplasmic side of the membrane. A helical transmembrane segment spans residues S250 to F270. The Periplasmic segment spans residues S271–L276. Residues D277–A297 form a helical membrane-spanning segment. The Cytoplasmic portion of the chain corresponds to P298–A573. Residues E339 to V572 form the ABC transporter domain. L373–V380 is an ATP binding site.

The protein belongs to the ABC transporter superfamily. Cysteine exporter (TC 3.A.1.129.1) family. In terms of assembly, forms a heterodimer with CydC.

It localises to the cell inner membrane. The enzyme catalyses L-cysteine(in) + ATP + H2O = L-cysteine(out) + ADP + phosphate + H(+). It carries out the reaction glutathione(in) + ATP + H2O = glutathione(out) + ADP + phosphate + H(+). With respect to regulation, ATPase activity is stimulated by various thiol compounds. The presence of heme leads to a further enhancement of thiol-stimulated ATPase activity, although a large excess of heme inhibits activity. Glutathione transport is inhibited by sodium orthovanadate, an inhibitor of ABC-type transport systems, but not by the proton ionophore carbonyl cyanide m-chlorophenylhydrazone (CCCP). Its function is as follows. Part of the ABC transporter complex CydDC that exports the reduced low-molecular-weight thiols cysteine and glutathione to the periplasm. Export of these thiol-containing redox-active molecules may be crucial for redox homeostasis in the periplasm, permitting correct assembly of various respiratory complexes and formation of correct disulfide bonds in periplasmic and secreted proteins. CydD contains transmembrane domains (TMD), which form a pore in the inner membrane, and an ATP-binding domain (NBD), which is responsible for energy generation. Required for the assembly of functional cytochrome bd-type quinol oxidases and periplasmic c-type cytochromes. Overexpression of CydDC under anaerobic conditions also results in the formation of a heme biosynthesis-derived pigment, P-574. CydDC binds heme b, but heme is probably not transported by the complex and instead has a role in regulating ATPase activity. In terms of biological role, conversely, a more recent study suggests an alternative function of CydDC: authors suggest that CydDC does not mediate the export of L-cysteine but rather reduces cytoplasmic L-cystine to L-cysteine. The principle function of CydDC would be to maintain the reduced state of cytoplasmic L-cysteine, thereby providing an important connection between sulfur metabolism, oxidative stress and resistance to antibiotics. This is Glutathione/L-cysteine transport system ATP-binding/permease protein CydD from Escherichia coli (strain K12).